Reading from the N-terminus, the 408-residue chain is Acetate kinase (408 aa).

Asparagine 7 contributes to the Mg(2+) binding site. Lysine 14 provides a ligand contact to ATP. A substrate-binding site is contributed by arginine 91. The active-site Proton donor/acceptor is aspartate 148. ATP-binding positions include 208-212 (HLGNG), 283-285 (DFR), and 331-335 (GIGEN). Glutamate 384 is a binding site for Mg(2+).

It belongs to the acetokinase family. Homodimer. Requires Mg(2+) as cofactor. Mn(2+) is required as a cofactor.

It localises to the cytoplasm. The enzyme catalyses acetate + ATP = acetyl phosphate + ADP. The protein operates within metabolic intermediate biosynthesis; acetyl-CoA biosynthesis; acetyl-CoA from acetate: step 1/2. Catalyzes the formation of acetyl phosphate from acetate and ATP. Can also catalyze the reverse reaction. The sequence is that of Acetate kinase from Methanosarcina mazei (Methanosarcina frisia).